A 201-amino-acid polypeptide reads, in one-letter code: Outer-membrane lipoprotein carrier protein (201 aa).

The N-terminal stretch at 1–21 is a signal peptide; that stretch reads MKKVLLTVCAIALFGSQAAWA.

Belongs to the LolA family. Monomer.

It is found in the periplasm. Its function is as follows. Participates in the translocation of lipoproteins from the inner membrane to the outer membrane. Only forms a complex with a lipoprotein if the residue after the N-terminal Cys is not an aspartate (The Asp acts as a targeting signal to indicate that the lipoprotein should stay in the inner membrane). This Proteus mirabilis (strain HI4320) protein is Outer-membrane lipoprotein carrier protein.